Here is a 259-residue protein sequence, read N- to C-terminus: uncharacterized protein (259 aa).

Residues Thr19 to Lys249 form the Radical SAM core domain. [4Fe-4S] cluster contacts are provided by Cys34, Cys38, and Cys41.

The cofactor is [4Fe-4S] cluster.

This is an uncharacterized protein from Methanocaldococcus jannaschii (strain ATCC 43067 / DSM 2661 / JAL-1 / JCM 10045 / NBRC 100440) (Methanococcus jannaschii).